We begin with the raw amino-acid sequence, 182 residues long: ATP-dependent protease subunit HslV (182 aa).

Residue Thr9 is part of the active site. Na(+) is bound by residues Ala167, Cys170, and Thr173.

Belongs to the peptidase T1B family. HslV subfamily. A double ring-shaped homohexamer of HslV is capped on each side by a ring-shaped HslU homohexamer. The assembly of the HslU/HslV complex is dependent on binding of ATP.

It localises to the cytoplasm. The enzyme catalyses ATP-dependent cleavage of peptide bonds with broad specificity.. Its activity is regulated as follows. Allosterically activated by HslU binding. Its function is as follows. Protease subunit of a proteasome-like degradation complex believed to be a general protein degrading machinery. The sequence is that of ATP-dependent protease subunit HslV from Enterococcus faecalis (strain ATCC 700802 / V583).